A 181-amino-acid polypeptide reads, in one-letter code: uncharacterized protein (181 aa).

Helical transmembrane passes span 24–46 (IAAV…LLNV) and 55–77 (GIVA…YILL).

It is found in the cell membrane. This is an uncharacterized protein from Archaeoglobus fulgidus (strain ATCC 49558 / DSM 4304 / JCM 9628 / NBRC 100126 / VC-16).